Here is a 239-residue protein sequence, read N- to C-terminus: Orotidine 5'-phosphate decarboxylase (239 aa).

Substrate-binding positions include D15, K36, D63 to T72, T127, R189, Q198, G218, and R219. The active-site Proton donor is K65.

This sequence belongs to the OMP decarboxylase family. Type 1 subfamily. Homodimer.

It catalyses the reaction orotidine 5'-phosphate + H(+) = UMP + CO2. The protein operates within pyrimidine metabolism; UMP biosynthesis via de novo pathway; UMP from orotate: step 2/2. In terms of biological role, catalyzes the decarboxylation of orotidine 5'-monophosphate (OMP) to uridine 5'-monophosphate (UMP). The protein is Orotidine 5'-phosphate decarboxylase of Prochlorococcus marinus (strain MIT 9515).